The following is a 789-amino-acid chain: ATP-dependent 6-phosphofructokinase (789 aa).

The segment at 1–404 is N-terminal catalytic PFK domain 1; sequence MSLKRNIRRL…NLETYKLLTK (404 aa). Residues glycine 41, 104–105, and 134–137 each bind ATP; these read RC and GDGS. Aspartate 135 contacts Mg(2+). Substrate contacts are provided by residues 180–182, arginine 217, 224–226, glutamate 280, arginine 307, and 313–316; these read SID, MGR, and HVQR. Residue aspartate 182 is the Proton acceptor of the active site. The segment at 405 to 419 is interdomain linker; sequence LRTVEKDNLSGGQNF. Residues 420-789 are C-terminal regulatory PFK domain 2; sequence NVAVMNVGAP…EAMEDTEDYD (370 aa). Beta-D-fructose 2,6-bisphosphate-binding positions include lysine 489, 547–551, arginine 585, 592–594, glutamate 647, arginine 673, 679–682, and arginine 753; these read TISNN, MGG, and HAQQ.

The protein belongs to the phosphofructokinase type A (PFKA) family. ATP-dependent PFK group I subfamily. Eukaryotic two domain clade 'E' sub-subfamily. In terms of assembly, homotetramer. Mg(2+) serves as cofactor.

Its subcellular location is the cytoplasm. The catalysed reaction is beta-D-fructose 6-phosphate + ATP = beta-D-fructose 1,6-bisphosphate + ADP + H(+). The protein operates within carbohydrate degradation; glycolysis; D-glyceraldehyde 3-phosphate and glycerone phosphate from D-glucose: step 3/4. With respect to regulation, allosterically activated by ADP, AMP, or fructose 2,6-bisphosphate, and allosterically inhibited by ATP or citrate. Functionally, catalyzes the phosphorylation of D-fructose 6-phosphate to fructose 1,6-bisphosphate by ATP, the first committing step of glycolysis. In Haemonchus contortus (Barber pole worm), this protein is ATP-dependent 6-phosphofructokinase (PFK).